The primary structure comprises 613 residues: YTH domain-containing family protein 2 (613 aa).

Disordered stretches follow at residues 1 to 43 (MSAS…AQPR), 215 to 234 (SQVS…AKTA), and 244 to 396 (AKPQ…TVPA). The segment at 2–397 (SASSLLEQRP…GMGGITVPAE (396 aa)) is localization to mRNA processing bodies (P-bodies). Over residues 16 to 27 (NKVQNGAVTQKD) the composition is skewed to polar residues. Composition is skewed to low complexity over residues 218-234 (STAP…AKTA), 295-307 (NGQP…PQPG), and 345-360 (PPQL…PSQP). The interval 398-613 (PHPVLEKLRM…RMQDRQGRVK (216 aa)) is interaction with m6A-containing mRNAs. Residues 423 to 557 (GRVFIIKSYS…DKARQVLKII (135 aa)) form the YTH domain. RNA contacts are provided by residues 429 to 431 (KSY), Asp-435, 445 to 446 (WC), Asn-475, Trp-499, and Trp-504. 2 stretches are compositionally biased toward basic and acidic residues: residues 578–587 (EEEESVKKVE) and 604–613 (RMQDRQGRVK). The segment at 578-613 (EEEESVKKVEVQGSDPYSNNSSRSHYRMQDRQGRVK) is disordered.

It belongs to the YTHDF family. YTHDF2 subfamily.

Its subcellular location is the cytoplasm. The protein resides in the cytosol. The protein localises to the P-body. It localises to the stress granule. It is found in the nucleus. Functionally, specifically recognizes and binds N6-methyladenosine (m6A)-containing RNAs, and regulates their stability. M6A is a modification present at internal sites of mRNAs and some non-coding RNAs and plays a role in mRNA stability and processing. Acts as a regulator of mRNA stability by promoting degradation of m6A-containing mRNAs. The YTHDF paralogs (ythdf1, ythdf2 and ythdf3) share m6A-containing mRNAs targets and act redundantly to mediate mRNA degradation and cellular differentiation. Plays a key role in maternal-to-zygotic transition during early embryonic development, the process during which maternally inherited mRNAs are degraded: acts by binding m6A-containing maternal mRNAs and promoting their degradation. More than one-third of maternal mRNAs can be modified by m6A. Binding to m6A-containing mRNAs results in mRNA degradation. Also involved in hematopoietic stem cells specification by binding to m6A-containing mRNAs, such as notch1a, and promote their degradation. The decreased Notch signaling following notch1a degradation promotes endothelial to hematopoietic transition. Promotes formation of phase-separated membraneless compartments, such as P-bodies or stress granules, by undergoing liquid-liquid phase separation upon binding to mRNAs containing multiple m6A-modified residues: polymethylated mRNAs act as a multivalent scaffold for the binding of YTHDF proteins, juxtaposing their disordered regions and thereby leading to phase separation. The resulting mRNA-YTHDF complexes then partition into different endogenous phase-separated membraneless compartments, such as P-bodies, stress granules or neuronal RNA granules. This is YTH domain-containing family protein 2 from Danio rerio (Zebrafish).